Reading from the N-terminus, the 576-residue chain is MKWDTGRMARIIEAAQGKRVVDLCIRRCRLVNVLSGSIDTVDLAIHEGFVAGWGSYRAAREIDADGMYVCPGFIDGHIHIESTLLAPAQFCAAAVPQGTAAVVADPHEIANVLGLSGIRYFLEASEGLPLDFFFNLPSCVPATPLETSGAALRAPDLDALLPHERLIGLAEMMNFPGVLSGFPDVIDKLLLFQARRIDGHAPQLGDLGLNAYVAAGITSDHECTTLEEAREKLAKGMTVMIREGGQSRDLAALLPAVDEHTWPRCCFVSDDVHPDGLLREGHMNVIVNRAMSLGMAPVRALSLAALTPARHFRLDRRGALAPGYHADFSMSPTLNPWQPERVFKAGVEVARDGRLLLDLGNGNGVAAPPSPMHITRLLAEDLVVPAQPGLLRIIGVREGTLLTRKIVLPPKIHEGAAVADLDRDILKLAVYNRYVPDRPPAVAFVQGLGLKEGAIATTVAHDSHNLIVAGASDADILHVVDAVRKSGGGMAAGRTGAEVDVLALPIAGLMSDQPVERVAERLEQLQGRARAAGSGLRNPFMALSFLALPVIPELKLTDLGLIDVSTFSPVSLFETS.

This sequence belongs to the metallo-dependent hydrolases superfamily. Adenine deaminase family. Requires Mn(2+) as cofactor.

The enzyme catalyses adenine + H2O + H(+) = hypoxanthine + NH4(+). This chain is Adenine deaminase, found in Syntrophobacter fumaroxidans (strain DSM 10017 / MPOB).